The primary structure comprises 479 residues: Poly(A) polymerase catalytic subunit (479 aa).

Catalysis depends on residues Asp-202 and Asp-204. Residues Asp-202, Asp-204, and Asp-253 each coordinate Ca(2+).

This sequence belongs to the poxviridae poly(A) polymerase catalytic subunit family. As to quaternary structure, heterodimer of a large (catalytic) subunit and a small (regulatory) subunit.

It carries out the reaction RNA(n) + ATP = RNA(n)-3'-adenine ribonucleotide + diphosphate. Its function is as follows. Polymerase that creates the 3'-poly(A) tail of mRNA's. The protein is Poly(A) polymerase catalytic subunit (OPG063) of Mus musculus (Mouse).